The primary structure comprises 128 residues: Azurin (128 aa).

Residues 1–128 (AECKTTIDST…SMMKGTVTLK (128 aa)) form the Plastocyanin-like domain. Residues C3 and C26 are joined by a disulfide bond. The Cu cation site is built by H46, C112, H117, and M121.

The protein localises to the periplasm. Functionally, transfers electrons from cytochrome c551 to cytochrome oxidase. In Pseudomonas fluorescens biotype B, this protein is Azurin.